A 693-amino-acid polypeptide reads, in one-letter code: MAQGSHQIDFQVLHDLRQKFPEVPEVVVSRCMLQNNNNLDACCAVLSQESTRYLYGEGDLNFSDESGISGLRNHMTSLNLDLQSQNVYHHGREGSRVNGSRTLTHSVSDGQLHGGQSNNELFQQEPQTAPAQVPQGFNVFGMPSTSGASNSTPHLGFHLGSKGTSNLSQQTPRFNPIMVTLAPNIQTGRSTPTSLHIHGVPPPVLNSPQGNSIYIRPYITTPSGTARQTQQHSGWVSQFNPMNPQQAYQPSQPGPWTTYPASNPLPHTSTQQPNQQGHQTSHVYMPISSPTTPQPPTIHSSGSSQSSAHSQYNIQNISTGPRKNQIEIKLEPPQRNSSSKLRSSGPRTASTSSLVNSQTLNRNQPTVYIAASPPNTDEMISRSQPKVYISANATAGDEQGMRNQPTLFISTNSGPSAASRNMSGQVSMGPAFIHHHPPKSRVLGGNSATSPRVVVTQPNTKYTFKITVSPNKPPAVSPGVVSPTFELTNLLNHPDHYVETENIQHLTDPALAHVDRISEARKLSMGSDDAAYTQALLVHQKARMERLQRELEMQKKKLDKLKSEVNEMENNLTRRRLKRSNSISQIPSLEEMQQLRSCNRQLQIDIDCLTKEIDLFQARGPHFNPSAIHNFYDNIGFVGPVPPKPKDQRSTIKAPKTQDAEDEEGAQWNCTACTFLNHPALIRCEQCEMPRHF.

The CUE domain occupies 8 to 51; sequence IDFQVLHDLRQKFPEVPEVVVSRCMLQNNNNLDACCAVLSQEST. Positions 90 to 171 are disordered; that stretch reads HGREGSRVNG…KGTSNLSQQT (82 aa). Polar residues-rich tracts occupy residues 97–130, 143–153, and 162–171; these read VNGS…QTAP, PSTSGASNSTP, and KGTSNLSQQT. R173 carries the asymmetric dimethylarginine modification. The segment covering 223–282 has biased composition (polar residues); sequence SGTARQTQQHSGWVSQFNPMNPQQAYQPSQPGPWTTYPASNPLPHTSTQQPNQQGHQTSH. The disordered stretch occupies residues 223–310; the sequence is SGTARQTQQH…SGSSQSSAHS (88 aa). A compositionally biased stretch (low complexity) spans 286–310; the sequence is PISSPTTPQPPTIHSSGSSQSSAHS. Residue K329 forms a Glycyl lysine isopeptide (Lys-Gly) (interchain with G-Cter in SUMO) linkage. Positions 330-380 are disordered; the sequence is LEPPQRNSSSKLRSSGPRTASTSSLVNSQTLNRNQPTVYIAASPPNTDEMI. Polar residues predominate over residues 334 to 366; that stretch reads QRNSSSKLRSSGPRTASTSSLVNSQTLNRNQPT. Phosphoserine occurs at positions 372, 450, 482, and 524. A coiled-coil region spans residues 532–619; the sequence is YTQALLVHQK…TKEIDLFQAR (88 aa). Residue K562 forms a Glycyl lysine isopeptide (Lys-Gly) (interchain with G-Cter in SUMO) linkage. S582 is subject to Phosphoserine. K611 is covalently cross-linked (Glycyl lysine isopeptide (Lys-Gly) (interchain with G-Cter in ubiquitin)). The interval 640–663 is disordered; it reads PVPPKPKDQRSTIKAPKTQDAEDE. The segment at 663–693 adopts a RanBP2-type zinc-finger fold; that stretch reads EEGAQWNCTACTFLNHPALIRCEQCEMPRHF. Positions 675-685 are interaction with polyubiquitin; the sequence is FLNHPALIRCE.

As to quaternary structure, interacts with MAP3K7 and TRAF6. Identified in the TRIKA2 complex composed of MAP3K7, TAB1 and TAB2. Binds 'Lys-63'-linked polyubiquitin chains. Interacts with NCOR1 and HDAC3 to form a ternary complex. Interacts (via C-terminal) with NUMBL (via PTB domain). Interacts (via the C-terminus) with DYNC2I2 (via WD domains). Interacts with RBCK1. Interacts with TRIM5. Interacts with TRIM38 (via B30.2/SPRY domain), leading to its translocation to lysosomes and degradation. Interacts with ASB1; this interaction promotes TAB2 stability. Post-translationally, SUMOylated by TRIM60; leading to inhibition of MAPK/NF-kappaB activation and the innate immune response. In terms of processing, ubiquitinated; following IL1 stimulation or TRAF6 overexpression. Ubiquitination involves RBCK1 leading to proteasomal degradation. Ubiquitinated at Lys-611 by TRIM45 leading to proteasomal degradation. Degraded in a lysosome-dependent manner following interaction with TRIM38. Post-translationally, phosphorylated. As to expression, widely expressed.

It localises to the membrane. The protein resides in the endosome membrane. It is found in the lysosome membrane. Its subcellular location is the cytoplasm. The protein localises to the cytosol. It localises to the nucleus. Functionally, adapter required to activate the JNK and NF-kappa-B signaling pathways through the specific recognition of 'Lys-63'-linked polyubiquitin chains by its RanBP2-type zinc finger (NZF). Acts as an adapter linking MAP3K7/TAK1 and TRAF6 to 'Lys-63'-linked polyubiquitin chains. The RanBP2-type zinc finger (NZF) specifically recognizes Lys-63'-linked polyubiquitin chains unanchored or anchored to the substrate proteins such as RIPK1/RIP1 and RIPK2: this acts as a scaffold to organize a large signaling complex to promote autophosphorylation of MAP3K7/TAK1, and subsequent activation of I-kappa-B-kinase (IKK) core complex by MAP3K7/TAK1. Also recognizes and binds Lys-63'-linked polyubiquitin chains of heterotypic 'Lys-63'-/'Lys-48'-linked branched ubiquitin chains. Regulates the IL1-mediated translocation of NCOR1 out of the nucleus. Involved in heart development. The polypeptide is TGF-beta-activated kinase 1 and MAP3K7-binding protein 2 (Tab2) (Mus musculus (Mouse)).